Here is a 418-residue protein sequence, read N- to C-terminus: Sonic hedgehog protein (418 aa).

The signal sequence occupies residues 1–23; that stretch reads MRLLTRVLLVSLLTLSLVVSGLA. Cysteine 24 carries the N-palmitoyl cysteine lipid modification. The Cardin-Weintraub signature appears at 32 to 38; sequence RRRHPKK. Glutamate 89, glutamate 90, aspartate 95, threonine 125, glutamate 126, aspartate 129, and aspartate 131 together coordinate Ca(2+). Residues histidine 140, aspartate 147, and histidine 182 each contribute to the Zn(2+) site. Residue glycine 197 is the site of Cholesterol glycine ester attachment.

It belongs to the hedgehog family. As to quaternary structure, interacts with HHATL/GUP1 which negatively regulates HHAT-mediated palmitoylation of the SHH N-terminus. Interacts with BOC and CDON. Interacts with HHIP. Interacts with DISP1 via its cholesterol anchor. Interacts with SCUBE2. Multimer. Post-translationally, the C-terminal domain displays an autoproteolysis activity and a cholesterol transferase activity. Both activities result in the cleavage of the full-length protein and covalent attachment of a cholesterol moiety to the C-terminal of the newly generated N-terminal fragment (ShhN). Cholesterylation is required for the sonic hedgehog protein N-product targeting to lipid rafts and multimerization. ShhN is the active species in both local and long-range signaling, whereas the C-product (ShhC) is degraded in the reticulum endoplasmic. N-palmitoylation by HHAT of ShhN is required for sonic hedgehog protein N-product multimerization and full activity. It is a prerequisite for the membrane-proximal positioning and the subsequent shedding of this N-terminal peptide. In terms of processing, the lipidated N- and C-terminal peptides of ShhNp can be cleaved (shedding). The N-terminal palmitoylated peptide is cleaved at the Cardin-Weintraub (CW) motif site. The cleavage reduced the interactions with heparan sulfate. The cleavage is enhanced by SCUBE2. Expressed in the ventral midline of the neural tube and brain. Also found in the notochord and in developing fin bud. In the developing brain, expression occurs in domains that include a discrete region in the floor of the diencephalon.

Its subcellular location is the endoplasmic reticulum membrane. It is found in the golgi apparatus membrane. The protein resides in the cell membrane. It catalyses the reaction glycyl-L-cysteinyl-[protein] + cholesterol + H(+) = [protein]-C-terminal glycyl cholesterol ester + N-terminal L-cysteinyl-[protein]. Functionally, the C-terminal part of the sonic hedgehog protein precursor displays an autoproteolysis and a cholesterol transferase activity. Both activities result in the cleavage of the full-length protein into two parts (ShhN and ShhC) followed by the covalent attachment of a cholesterol moiety to the C-terminal of the newly generated ShhN. Both activities occur in the endoplasmic reticulum. Once cleaved, ShhC is degraded in the endoplasmic reticulum. In terms of biological role, the dually lipidated sonic hedgehog protein N-product (ShhNp) is a morphogen which is essential for a variety of patterning events during development. Involved in dorso-ventral patterning of the brain and in early patterning of the developing eyes. Binds to the patched (PTCH1) receptor, which functions in association with smoothened (SMO), to activate the transcription of target genes. In the absence of SHH, PTCH1 represses the constitutive signaling activity of SMO. The sequence is that of Sonic hedgehog protein (shha) from Danio rerio (Zebrafish).